We begin with the raw amino-acid sequence, 317 residues long: 17-beta-hydroxysteroid dehydrogenase type 6 (317 aa).

The first 17 residues, M1–W17, serve as a signal peptide directing secretion. Residue F33 to L57 participates in NAD(+) binding. N-linked (GlcNAc...) asparagine glycosylation is found at N71 and N161. Position 164 (S164) interacts with substrate. Residue Y176 is the Proton acceptor of the active site.

Belongs to the short-chain dehydrogenases/reductases (SDR) family. In terms of tissue distribution, detected in liver.

Its subcellular location is the microsome membrane. The protein resides in the early endosome membrane. It catalyses the reaction all-trans-retinol--[retinol-binding protein] + NAD(+) = all-trans-retinal--[retinol-binding protein] + NADH + H(+). The catalysed reaction is all-trans-retinol + NAD(+) = all-trans-retinal + NADH + H(+). It carries out the reaction androsterone + NAD(+) = 5alpha-androstan-3,17-dione + NADH + H(+). The enzyme catalyses testosterone + NAD(+) = androst-4-ene-3,17-dione + NADH + H(+). It catalyses the reaction 5alpha-androstane-3alpha,17beta-diol + NAD(+) = 17beta-hydroxy-5alpha-androstan-3-one + NADH + H(+). The catalysed reaction is 17beta-estradiol + NAD(+) = estrone + NADH + H(+). It carries out the reaction 17beta-estradiol + NADP(+) = estrone + NADPH + H(+). The enzyme catalyses 3alpha-hydroxy-5alpha-pregnan-20-one + NAD(+) = 5alpha-pregnane-3,20-dione + NADH + H(+). It catalyses the reaction 5alpha-androstane-3beta,17beta-diol + NAD(+) = 17beta-hydroxy-5alpha-androstan-3-one + NADH + H(+). The catalysed reaction is 3beta-hydroxy-5alpha-androstan-17-one + NAD(+) = 5alpha-androstan-3,17-dione + NADH + H(+). With respect to regulation, inhibited by carbenoxolone and phenyl arsenoxide. Its function is as follows. NAD-dependent oxidoreductase with broad substrate specificity that shows both oxidative and reductive activity (in vitro). Has 17-beta-hydroxysteroid dehydrogenase activity towards various steroids (in vitro). Converts 5-alpha-androstan-3-alpha,17-beta-diol to androsterone and estradiol to estrone (in vitro). Has 3-alpha-hydroxysteroid dehydrogenase activity towards androsterone (in vitro). Has retinol dehydrogenase activity towards all-trans-retinol (in vitro). The polypeptide is 17-beta-hydroxysteroid dehydrogenase type 6 (Hsd17b6) (Mus musculus (Mouse)).